A 418-amino-acid polypeptide reads, in one-letter code: Secreted beta-glucosidase SUN41 (418 aa).

The signal sequence occupies residues 1 to 23 (MRFSQATVLAFAALSLAAPAFEA). Over residues 81-97 (SEETSSTSTSISSTTTI) the composition is skewed to low complexity. Residues 81-150 (SEETSSTSTS…SGSTNGIEGD (70 aa)) form a disordered region. Asn-100 is a glycosylation site (N-linked (GlcNAc...) asparagine). Positions 112–126 (SLPSGTIKPSSFATE) are enriched in polar residues. Low complexity predominate over residues 127-136 (SQSQSQSSST).

The protein belongs to the SUN family. Post-translationally, predicted to be a substrate for cleavage by KEX2.

The protein localises to the secreted. The protein resides in the cell wall. Its function is as follows. Cell surface beta-glucosidase involved in cytokinesis, cell wall biogenesis, adhesion to host tissue, and biofilm formation; thus playing an important role in the host-pathogen interaction. Has hydrolytic activity on linear (1-&gt;3)-beta-D-glucans such as laminaribiose and other laminarioligosaccharides. The protein is Secreted beta-glucosidase SUN41 of Candida albicans (strain SC5314 / ATCC MYA-2876) (Yeast).